Reading from the N-terminus, the 256-residue chain is Probable aquaporin TIP4-2 (256 aa).

The next 5 membrane-spanning stretches (helical) occupy residues 25 to 45 (AVAGELLFTFLFVFIGVASTI), 59 to 79 (AVTAAAMAQALVVAVLATAGF), 86 to 108 (LNPAVTLSLAVGGHITLFRSALY), 146 to 166 (GVAAEAVFTFTLLLVICATIL), and 178 to 198 (PLLTGLLVGANTVAGGALTGA). The short motif at 87 to 89 (NPA) is the NPA 1 element. The NPA 2 motif lies at 201-203 (NPA). The chain crosses the membrane as a helical span at residues 220–240 (VYWVGPLAGGPLAVVAYELLF).

It belongs to the MIP/aquaporin (TC 1.A.8) family. TIP (TC 1.A.8.10) subfamily. As to expression, expressed in roots, leaves and anthers.

The protein resides in the vacuole membrane. Functionally, aquaporins facilitate the transport of water and small neutral solutes across cell membranes. May be involved in transport from the vacuolar compartment to the cytoplasm. This chain is Probable aquaporin TIP4-2 (TIP4-2), found in Oryza sativa subsp. japonica (Rice).